Consider the following 75-residue polypeptide: Putative membrane protein insertion efficiency factor (75 aa).

This sequence belongs to the UPF0161 family.

Its subcellular location is the cell inner membrane. Could be involved in insertion of integral membrane proteins into the membrane. The protein is Putative membrane protein insertion efficiency factor of Leptospira biflexa serovar Patoc (strain Patoc 1 / ATCC 23582 / Paris).